The chain runs to 648 residues: Indolepyruvate oxidoreductase subunit IorA (648 aa).

4Fe-4S ferredoxin-type domains are found at residues 585-614 (PIYQVNEEKCTGCKICINAYGCPAIYWDAE) and 616-645 (KKARVDPLMCWGCGGCAQVCPFGAFEKVRE). Positions 594, 597, 600, 606, 625, 628, 631, and 635 each coordinate [4Fe-4S] cluster.

In terms of assembly, heterodimer of the IorA and IorB subunits. It depends on [4Fe-4S] cluster as a cofactor.

The catalysed reaction is indole-3-pyruvate + 2 oxidized [2Fe-2S]-[ferredoxin] + CoA = (indol-3-yl)acetyl-CoA + 2 reduced [2Fe-2S]-[ferredoxin] + CO2 + H(+). Functionally, catalyzes the ferredoxin-dependent oxidative decarboxylation of arylpyruvates. The sequence is that of Indolepyruvate oxidoreductase subunit IorA (iorA) from Pyrococcus horikoshii (strain ATCC 700860 / DSM 12428 / JCM 9974 / NBRC 100139 / OT-3).